The following is a 188-amino-acid chain: MILIVGLGNPGKQYEKTRHNIGFDVIDYMANKYNIDVNREKFKGICGEGFIENKKVILLKPLTYMNLSGESIREFVNFYKLEDDEIIVVYDDISLDIGRLRIREKGSAGGHNGIKSIIQNLGGDKFPRVKVGVGQPKDNLVNHVLGKFSKEDREHIEKVIPVVSDAIVEIVKNDAKESMNKFNGVNIE.

Tyrosine 14 provides a ligand contact to tRNA. Residue histidine 19 is the Proton acceptor of the active site. TRNA-binding residues include tyrosine 64, asparagine 66, and asparagine 112.

This sequence belongs to the PTH family. In terms of assembly, monomer.

The protein resides in the cytoplasm. It carries out the reaction an N-acyl-L-alpha-aminoacyl-tRNA + H2O = an N-acyl-L-amino acid + a tRNA + H(+). In terms of biological role, hydrolyzes ribosome-free peptidyl-tRNAs (with 1 or more amino acids incorporated), which drop off the ribosome during protein synthesis, or as a result of ribosome stalling. Its function is as follows. Catalyzes the release of premature peptidyl moieties from peptidyl-tRNA molecules trapped in stalled 50S ribosomal subunits, and thus maintains levels of free tRNAs and 50S ribosomes. The sequence is that of Peptidyl-tRNA hydrolase from Clostridium perfringens (strain SM101 / Type A).